We begin with the raw amino-acid sequence, 540 residues long: Chaperonin GroEL (540 aa).

ATP is bound by residues 29-32, 86-90, glycine 413, 476-478, and aspartate 492; these read TLGP, DGTTT, and NAA.

The protein belongs to the chaperonin (HSP60) family. As to quaternary structure, forms a cylinder of 14 subunits composed of two heptameric rings stacked back-to-back. Interacts with the co-chaperonin GroES.

It localises to the cytoplasm. The enzyme catalyses ATP + H2O + a folded polypeptide = ADP + phosphate + an unfolded polypeptide.. In terms of biological role, together with its co-chaperonin GroES, plays an essential role in assisting protein folding. The GroEL-GroES system forms a nano-cage that allows encapsulation of the non-native substrate proteins and provides a physical environment optimized to promote and accelerate protein folding. The chain is Chaperonin GroEL from Streptococcus gordonii (strain Challis / ATCC 35105 / BCRC 15272 / CH1 / DL1 / V288).